A 720-amino-acid polypeptide reads, in one-letter code: Glycine--tRNA ligase beta subunit (720 aa).

Belongs to the class-II aminoacyl-tRNA synthetase family. As to quaternary structure, tetramer of two alpha and two beta subunits.

It localises to the cytoplasm. It carries out the reaction tRNA(Gly) + glycine + ATP = glycyl-tRNA(Gly) + AMP + diphosphate. The chain is Glycine--tRNA ligase beta subunit from Dinoroseobacter shibae (strain DSM 16493 / NCIMB 14021 / DFL 12).